The sequence spans 174 residues: uncharacterized protein (174 aa).

This is an uncharacterized protein from Bacillus subtilis (strain 168).